The sequence spans 161 residues: Beta-lactoglobulin-2 (161 aa).

Disulfide bonds link Cys66/Cys159 and Cys106/Cys119.

It belongs to the calycin superfamily. Lipocalin family. In terms of assembly, monomer. As to expression, synthesized in mammary gland and secreted in milk.

It localises to the secreted. Functionally, primary component of whey, it binds retinol and is probably involved in the transport of that molecule. The polypeptide is Beta-lactoglobulin-2 (LGB2) (Canis lupus familiaris (Dog)).